The primary structure comprises 192 residues: Glycerol-3-phosphate acyltransferase (192 aa).

Transmembrane regions (helical) follow at residues 5-25 (VVLILSYILGSIPFSLIITRI), 50-70 (FLAALALFLDSFKGFIAVYIA), 78-98 (DFYIYVSAILAVLGHMFPIWL), 112-132 (ILIAFNIDITLVFVIIWIIVF), and 153-173 (SFFFQRNLFLTLLIIGALVFL).

Belongs to the PlsY family. Probably interacts with PlsX.

Its subcellular location is the cell membrane. It carries out the reaction an acyl phosphate + sn-glycerol 3-phosphate = a 1-acyl-sn-glycero-3-phosphate + phosphate. Its pathway is lipid metabolism; phospholipid metabolism. Functionally, catalyzes the transfer of an acyl group from acyl-phosphate (acyl-PO(4)) to glycerol-3-phosphate (G3P) to form lysophosphatidic acid (LPA). This enzyme utilizes acyl-phosphate as fatty acyl donor, but not acyl-CoA or acyl-ACP. The protein is Glycerol-3-phosphate acyltransferase of Wolbachia pipientis wMel.